Here is an 81-residue protein sequence, read N- to C-terminus: Large ribosomal subunit protein bL31B (81 aa).

The protein belongs to the bacterial ribosomal protein bL31 family. Type B subfamily. In terms of assembly, part of the 50S ribosomal subunit.

This chain is Large ribosomal subunit protein bL31B, found in Lactobacillus acidophilus (strain ATCC 700396 / NCK56 / N2 / NCFM).